A 615-amino-acid polypeptide reads, in one-letter code: MADYNTLYQQGLYLSPDQQDLLLAALSSNNPTQKQQTVTHNSEANQNLNHTPGHASSGSFSVSPPSGLDGSVNQSTTFGYEDSPYLDLNPDFDLDFLGNESLIGDLPPSLPSTEDYEPGDKRKDIDGQVNDKEDSGKKRRESDEKAAKKPGRKPLTSEPTSKRKAQNRAAQRAFRERKEKHLKDLEAKVEELQKASDNANQENGLLRAQVERLQLELKEYRKRLSWVTSTSGLSPVNAIPGAYSKGMYGLNNNEFMFDFPKFGDLPGSHLFTNTQTSKSNQNKAKDNPTATPRSEAQVPGVLNRNDLKISSPNGLSNGPSPAKSTPSGQTPNSQTSTRPGSGTLNGAVDNNGAARGYQVNSSYSASTKQATHDTPSSDSPSSSSDSHQSQLLSSNGTSPEPSLHSPAVKATESSTPHACTYTTINGEESFCAQLSMACGNINNPIPAVRQNSESASNTPSHANSSDKALGLDFFAQQNGGQFDPVLFGDWREPQDAILSQDFGTFFDDAFPLPDLGSPSHNFSEATKQPAAPKKDLIAEIDSKLDEDEEVVPGEDKSQMLTCNKIWDRLQSMEKFRNGEIDVDNLCSELRTKARCSEGGVVVNQKDVEDIMGRVK.

Residues 27 to 50 (SSNNPTQKQQTVTHNSEANQNLNH) show a composition bias toward polar residues. Disordered stretches follow at residues 27–84 (SSNN…EDSP) and 99–180 (NESL…RKEK). The Bipartite nuclear localization signal signature appears at 35-42 (QQTVTHNS). A compositionally biased stretch (low complexity) spans 52–67 (PGHASSGSFSVSPPSG). A Bipartite nuclear localization signal motif is present at residues 68-75 (LDGSVNQS). Residues 118–147 (PGDKRKDIDGQVNDKEDSGKKRRESDEKAA) are compositionally biased toward basic and acidic residues. The region spanning 157-220 (SEPTSKRKAQ…ERLQLELKEY (64 aa)) is the bZIP domain. The interval 162–183 (KRKAQNRAAQRAFRERKEKHLK) is basic motif. The segment at 185-192 (LEAKVEEL) is leucine-zipper. Residues 214 to 364 (QLELKEYRKR…RGYQVNSSYS (151 aa)) are transcription activation 1. Residues 270-294 (LFTNTQTSKSNQNKAKDNPTATPRS) show a composition bias toward polar residues. Positions 270–416 (LFTNTQTSKS…AVKATESSTP (147 aa)) are disordered. Residues 289-301 (TATPRSEAQVPGV) form a n-CRD region. Residues 310-321 (SSPNGLSNGPSP) show a composition bias toward low complexity. Composition is skewed to polar residues over residues 322–344 (AKSTPSGQTPNSQTSTRPGSGTL) and 358–369 (QVNSSYSASTKQ). A compositionally biased stretch (low complexity) spans 372–394 (HDTPSSDSPSSSSDSHQSQLLSS). The transcription activation 2 stretch occupies residues 409-508 (KATESSTPHA…SQDFGTFFDD (100 aa)). Intrachain disulfides connect Cys-562–Cys-586, Cys-562–Cys-595, and Cys-586–Cys-595. The tract at residues 562–595 (CNKIWDRLQSMEKFRNGEIDVDNLCSELRTKARC) is c-CRD. Positions 580-587 (IDVDNLCS) match the Nuclear export signal motif.

The protein belongs to the bZIP family. YAP subfamily. Depending on the oxidative stress inducing agent, yap1 can undergo two distinct conformational changes, both involving disulfide bond formation, and both masking the nuclear export signal, thus abolishing nuclear export.

The protein localises to the nucleus. Its subcellular location is the cytoplasm. Functionally, transcription activator involved in oxidative stress response and redox homeostasis. Regulates the transcription of genes encoding antioxidant enzymes and components of the cellular thiol-reducing pathways, including thioredoxin peroxidase (aspF3), cytochrome peroxidase, and the protein AFUA_3G00730, which appears to belong to the glutathione S-transferase family. Proteins of the protein degradation pathway are also regulated by yap1, as well the p-nitroreductase family protein AFUA_5G09910. May be involved in antifungal resistance to voriconazole. This Aspergillus fumigatus (strain ATCC MYA-4609 / CBS 101355 / FGSC A1100 / Af293) (Neosartorya fumigata) protein is AP-1-like transcription factor yap1.